The primary structure comprises 162 residues: UPF0303 protein RL3365 (162 aa).

Belongs to the UPF0303 family.

The protein is UPF0303 protein RL3365 of Rhizobium johnstonii (strain DSM 114642 / LMG 32736 / 3841) (Rhizobium leguminosarum bv. viciae).